A 658-amino-acid polypeptide reads, in one-letter code: Sulfate transporter 3.1 (658 aa).

Topologically, residues 1 to 85 (MGTEDYTFPQ…RYNLKFFKSD (85 aa)) are cytoplasmic. Residues 86-106 (LIAGITIASLAIPQGISYAKL) traverse the membrane as a helical segment. The Extracellular segment spans residues 107–108 (AN). A helical membrane pass occupies residues 109-129 (LPPILGLYSSFVPPLVYAVLG). Topologically, residues 130-133 (SSRD) are cytoplasmic. Residues 134 to 154 (LAVGTVAVASLLTGAMLSKEV) traverse the membrane as a helical segment. The Extracellular segment spans residues 155-163 (DAEKDPKLY). A helical transmembrane segment spans residues 164 to 184 (LHLAFTATFFAGVLEASLGIF). A topological domain (cytoplasmic) is located at residue Arg-185. The chain crosses the membrane as a helical span at residues 186–206 (LGFIVDFLSHATIVGFMGGAA). Residues 207–245 (TVVSLQQLKGIFGLKHFTDSTDVISVMRSVFSQTHEWRW) are Extracellular-facing. The chain crosses the membrane as a helical span at residues 246-266 (ESGVLGCGFLFFLLSTRYFSI). Residues 267–271 (KKPKF) are Cytoplasmic-facing. Residues 272–292 (FWVAAMAPLTSVILGSLLVYF) traverse the membrane as a helical segment. Residues 293 to 332 (THAERHGVQVIGDLKKGLNPLSGSDLIFTSPYMSTAVKTG) lie on the Extracellular side of the membrane. A helical transmembrane segment spans residues 333–353 (LITGIIALAEGVAVGRSFAMF). Residues 354–363 (KNYNIDGNKE) lie on the Cytoplasmic side of the membrane. A helical transmembrane segment spans residues 364 to 384 (MIAFGMMNIVGSFTSCYLTTG). Residues 385 to 398 (PFSRSAVNYNAGCK) lie on the Extracellular side of the membrane. Residues 399 to 419 (TAMSNIVMAIAVMFTLLFLTP) form a helical membrane-spanning segment. Residues 420-425 (LFHYTP) are Cytoplasmic-facing. A helical membrane pass occupies residues 426 to 446 (LVVLSAIIISAMLGLIDYQAA). Residues 447–464 (IHLWKVDKFDFLVCMSAY) are Extracellular-facing. The helical transmembrane segment at 465 to 485 (VGVVFGSVEIGLVVAVAISIA) threads the bilayer. Residues 486–658 (RLLLFVSRPK…ASKNEPWNNV (173 aa)) are Cytoplasmic-facing. The 125-residue stretch at 513–637 (QYPSSRTVPG…LTVGEAVEAC (125 aa)) folds into the STAS domain.

It belongs to the SLC26A/SulP transporter (TC 2.A.53) family. In terms of tissue distribution, expressed only in leaves.

Its subcellular location is the membrane. Its function is as follows. H(+)/sulfate cotransporter that may play a role in the regulation of sulfate assimilation. The sequence is that of Sulfate transporter 3.1 (SULTR3;1) from Arabidopsis thaliana (Mouse-ear cress).